The sequence spans 129 residues: Small ribosomal subunit protein uS11 (129 aa).

It belongs to the universal ribosomal protein uS11 family. Part of the 30S ribosomal subunit. Interacts with proteins S7 and S18. Binds to IF-3.

Its function is as follows. Located on the platform of the 30S subunit, it bridges several disparate RNA helices of the 16S rRNA. Forms part of the Shine-Dalgarno cleft in the 70S ribosome. This chain is Small ribosomal subunit protein uS11, found in Idiomarina loihiensis (strain ATCC BAA-735 / DSM 15497 / L2-TR).